The following is a 509-amino-acid chain: Maturase K (509 aa).

This sequence belongs to the intron maturase 2 family. MatK subfamily.

Its subcellular location is the plastid. It is found in the chloroplast. Usually encoded in the trnK tRNA gene intron. Probably assists in splicing its own and other chloroplast group II introns. The protein is Maturase K of Metasequoia glyptostroboides (Dawn redwood).